Here is a 454-residue protein sequence, read N- to C-terminus: MKISLTNRVRTTIRERKLFREGNRLVLVALSGGADSVALLCVLRELGYETVAAHCNFHLRGVESDEDAAFVEGLCRDLDVPLHRIDFDTVRYARERSISIEMAARELRYEWFGLLRKELAIEYVAVAHHADDNAETMVLNLCRGTGISGLCGMPYKRNDGIVRPLLDATRDEIEAYLLDQKITYRTDSSNEDTRFRRNLVRHRIMPLLKELNPSLQEALLRTRENLEGVAAFFSKATEDFHNTLRATASISIREVKETPAPFTLLYDLLHPYGFNRDQIREVVTSLDNPPGASFFSSSHRLLRERDRLTVLPLSPKMEVPELFGLKIGDSFLDLPDGKQLSWQRGTPADLDLEGLRLPNTKLLLPLAFVESLQEELGVRRPQRGDHIHPYGMKGCKTVSRFFIDRHVPRRRREEAWLLCQGTEVVWIMGYAADRRFAIDELSDTEEYLLFSFEL.

31-36 (SGGADS) is an ATP binding site.

It belongs to the tRNA(Ile)-lysidine synthase family.

The protein localises to the cytoplasm. It catalyses the reaction cytidine(34) in tRNA(Ile2) + L-lysine + ATP = lysidine(34) in tRNA(Ile2) + AMP + diphosphate + H(+). Functionally, ligates lysine onto the cytidine present at position 34 of the AUA codon-specific tRNA(Ile) that contains the anticodon CAU, in an ATP-dependent manner. Cytidine is converted to lysidine, thus changing the amino acid specificity of the tRNA from methionine to isoleucine. In Porphyromonas gingivalis (strain ATCC 33277 / DSM 20709 / CIP 103683 / JCM 12257 / NCTC 11834 / 2561), this protein is tRNA(Ile)-lysidine synthase.